We begin with the raw amino-acid sequence, 662 residues long: Sodium/glucose cotransporter 1 (662 aa).

The Extracellular segment spans residues 1-24; that stretch reads MDSSTWSPATTATTEPLKPHERIR. The chain crosses the membrane as a helical span at residues 25–47; sequence NAADISVIVIYFVVVMAVGLWAM. Topologically, residues 48–66 are cytoplasmic; the sequence is CSTNRGTVGGFFLAGRSMV. A helical transmembrane segment spans residues 67–90; it reads WWPVGASLFASNIGSGHFVGLAGT. Topologically, residues 91 to 95 are extracellular; that stretch reads GAAAG. Residues 96-117 traverse the membrane as a helical segment; that stretch reads IATGGFEWNALIWVVVLGWLFV. Topologically, residues 118-139 are cytoplasmic; the sequence is PIYIKAGVVTMPEYLRKRFGGK. A helical membrane pass occupies residues 140-169; sequence RIQVYLSILSLMLYIFTKISADIFSGAIFI. The Extracellular segment spans residues 170 to 176; it reads TLALGLD. Residues 177 to 193 traverse the membrane as a helical segment; the sequence is LYLAIFLLLAITGLYTI. Residues 194–202 lie on the Cytoplasmic side of the membrane; it reads TGGLAAVIY. The chain crosses the membrane as a helical span at residues 203–221; the sequence is TDTLQTAIMLVGSFILTGF. Topologically, residues 222 to 275 are extracellular; the sequence is AFHEVGGYDAFMEKYMNAIPTVISDGNITIKKECYTPRADSFHIFRDPLKGDLP. The N-linked (GlcNAc...) asparagine glycan is linked to asparagine 248. 5 disulfide bridges follow: cysteine 255/cysteine 511, cysteine 255/cysteine 608, cysteine 345/cysteine 351, cysteine 355/cysteine 361, and cysteine 517/cysteine 522. The helical transmembrane segment at 276-295 threads the bilayer; it reads WPGLTFGLSILALWYWCTDQ. Residues 296 to 309 lie on the Cytoplasmic side of the membrane; the sequence is VIVQRCLSAKNMSH. A helical transmembrane segment spans residues 310–331; it reads VKAGCVMCGYFKLLPMFVIVMP. The Extracellular portion of the chain corresponds to 332–375; sequence GMISRVLYTEKIACTVPSECEKYCGTKVGCSNIAYPTLVVELMP. The chain crosses the membrane as a helical span at residues 376–406; sequence NGLRGLMLSVMLASLMSSLTSIFNSASTLFT. Residues 407–422 lie on the Cytoplasmic side of the membrane; that stretch reads MDVYTKIRKRASEKEL. The helical transmembrane segment at 423-444 threads the bilayer; sequence MIAGRLFILVLIGISIAWVPIV. At 445 to 451 the chain is on the extracellular side; sequence QSAQSGQ. The helical transmembrane segment at 452–477 threads the bilayer; the sequence is LFDYIQSVTSYLGPPIAAVFLLAIFC. Over 478–481 the chain is Cytoplasmic; that stretch reads KRVN. A helical membrane pass occupies residues 482 to 504; sequence EEGAFWGLVIGCMIGLARMITEF. Residues 505–525 lie on the Extracellular side of the membrane; sequence AYGTGSCVEPSNCPTIICGVH. The helical transmembrane segment at 526–547 threads the bilayer; that stretch reads YLYFAIILFVISIIIVLVVSLF. Residues 548–642 are Cytoplasmic-facing; sequence TKPIPDVHLY…TSEKPLWRTV (95 aa). Threonine 587 is subject to Phosphothreonine. A helical transmembrane segment spans residues 643-660; the sequence is VNINGIILLTVAVFCHAY. Topologically, residues 661 to 662 are extracellular; the sequence is FA.

Belongs to the sodium:solute symporter (SSF) (TC 2.A.21) family. In terms of processing, N-glycosylation is not necessary for the cotransporter function.

The protein resides in the apical cell membrane. The catalysed reaction is D-glucose(out) + 2 Na(+)(out) = D-glucose(in) + 2 Na(+)(in). It carries out the reaction D-galactose(out) + 2 Na(+)(out) = D-galactose(in) + 2 Na(+)(in). Its activity is regulated as follows. Enhanced by the interaction with PDZK1IP1/MAP17; but unlike SLC5A2/SGLT2, PDZK1IP1 is not essential for SLC5A1 transporter activity. Possibly modulated by cholesterol binding. In terms of biological role, electrogenic Na(+)-coupled sugar symporter that actively transports D-glucose or D-galactose at the plasma membrane, with a Na(+) to sugar coupling ratio of 2:1. Transporter activity is driven by a transmembrane Na(+) electrochemical gradient set by the Na(+)/K(+) pump. Has a primary role in the transport of dietary monosaccharides from enterocytes to blood. Responsible for the absorption of D-glucose or D-galactose across the apical brush-border membrane of enterocytes, whereas basolateral exit is provided by GLUT2. Additionally, functions as a D-glucose sensor in enteroendocrine cells, triggering the secretion of the incretins GCG and GIP that control food intake and energy homeostasis. Together with SGLT2, functions in reabsorption of D-glucose from glomerular filtrate, playing a nonredundant role in the S3 segment of the proximal tubules. Transports D-glucose into endometrial epithelial cells, controlling glycogen synthesis and nutritional support for the embryo as well as the decidual transformation of endometrium prior to conception. Acts as a water channel enabling passive water transport in response to the osmotic gradient created upon sugar and Na(+) uptake. Has high water conductivity comparable to aquaporins and therefore is expected to play an important role in transepithelial water permeability, especially in the small intestine. This chain is Sodium/glucose cotransporter 1 (SLC5A1), found in Sus scrofa (Pig).